A 596-amino-acid chain; its full sequence is Elongation factor 4 (596 aa).

Residues 2–184 form the tr-type G domain; that stretch reads KQIRNFSIIA…VIVAKIPPPE (183 aa). Residues 14–19 and 131–134 each bind GTP; these read DHGKST and NKID.

The protein belongs to the TRAFAC class translation factor GTPase superfamily. Classic translation factor GTPase family. LepA subfamily.

It localises to the cell inner membrane. It catalyses the reaction GTP + H2O = GDP + phosphate + H(+). Required for accurate and efficient protein synthesis under certain stress conditions. May act as a fidelity factor of the translation reaction, by catalyzing a one-codon backward translocation of tRNAs on improperly translocated ribosomes. Back-translocation proceeds from a post-translocation (POST) complex to a pre-translocation (PRE) complex, thus giving elongation factor G a second chance to translocate the tRNAs correctly. Binds to ribosomes in a GTP-dependent manner. This is Elongation factor 4 from Shewanella baltica (strain OS155 / ATCC BAA-1091).